The sequence spans 337 residues: Mitochondrial metalloendopeptidase OMA1 (337 aa).

The Mitochondrial matrix portion of the chain corresponds to 1-68 (MFLNKYISNY…QPNPRDKRFQ (68 aa)). The chain crosses the membrane as a helical span at residues 69–89 (WIFGALIAGGGVYYFTHLEYV). The Mitochondrial intermembrane portion of the chain corresponds to 90 to 337 (PISNRRRFND…MLQSFKEVHW (248 aa)). H195 is a binding site for Zn(2+). E196 is an active-site residue. Zn(2+) is bound by residues H199 and E250. Residues C265 and C321 are joined by a disulfide bond.

It belongs to the peptidase M48 family. Requires Zn(2+) as cofactor.

It localises to the mitochondrion inner membrane. With respect to regulation, protease activity is induced in response to various mitochondrial stress. Functionally, protease that is part of the quality control system in the inner membrane of mitochondria. Cleaves and thereby promotes the turnover of mistranslated or misfolded membrane protein. The sequence is that of Mitochondrial metalloendopeptidase OMA1 from Schizosaccharomyces pombe (strain 972 / ATCC 24843) (Fission yeast).